Here is a 195-residue protein sequence, read N- to C-terminus: Imidazoleglycerol-phosphate dehydratase (195 aa).

Belongs to the imidazoleglycerol-phosphate dehydratase family.

The protein localises to the cytoplasm. It carries out the reaction D-erythro-1-(imidazol-4-yl)glycerol 3-phosphate = 3-(imidazol-4-yl)-2-oxopropyl phosphate + H2O. Its pathway is amino-acid biosynthesis; L-histidine biosynthesis; L-histidine from 5-phospho-alpha-D-ribose 1-diphosphate: step 6/9. The sequence is that of Imidazoleglycerol-phosphate dehydratase from Cereibacter sphaeroides (strain ATCC 17023 / DSM 158 / JCM 6121 / CCUG 31486 / LMG 2827 / NBRC 12203 / NCIMB 8253 / ATH 2.4.1.) (Rhodobacter sphaeroides).